Here is a 426-residue protein sequence, read N- to C-terminus: MQKNITNVSEIAQELEIILTAEEYQPEYDQQLEEARKSVRIKGFRQGHVPVGMLKRIIGPSIEAEVAEKMASKYFAAIAEEEKINPASRAQIESYNYEDGKLTIKISYEIHPEFELKDFSEYTFTQAEYTISDEDVDREIKLILRGHGTMVTSEDAAAEGDTVIGDVTKLDADGADIEGSKNENHHFNLEYLPADNPFRMALEGKKAGDVVDVTVKPKEEGGETNRFRIEIKEVKHLELPELDDELVKEISQQRFEKVEDFRNDIRLQLQAHFSDKSEYDLLEAISSKLIEEHPVPTPSAMVAHFQNILLENAKRQVGGQFPKGFDEREFFNAMKPNAEKHARWLLISQKIAKENNLEVTDEDIKAFAEKEAEKEPSLTVDQLLNTYLSTEFKDYIIDTILKEKIYDVIKSKVTITKEATPVPAHN.

One can recognise a PPIase FKBP-type domain in the interval 160–240 (GDTVIGDVTK…IKEVKHLELP (81 aa)).

Belongs to the FKBP-type PPIase family. Tig subfamily.

The protein resides in the cytoplasm. The catalysed reaction is [protein]-peptidylproline (omega=180) = [protein]-peptidylproline (omega=0). Functionally, involved in protein export. Acts as a chaperone by maintaining the newly synthesized protein in an open conformation. Functions as a peptidyl-prolyl cis-trans isomerase. In Chlorobaculum tepidum (strain ATCC 49652 / DSM 12025 / NBRC 103806 / TLS) (Chlorobium tepidum), this protein is Trigger factor.